The primary structure comprises 84 residues: Defensin-like protein 140 (84 aa).

The first 28 residues, 1–28, serve as a signal peptide directing secretion; the sequence is MSKSLQLIVTVLCIFTILVLGEICLAKG. 4 cysteine pairs are disulfide-bonded: Cys37–Cys81, Cys46–Cys65, Cys51–Cys75, and Cys55–Cys77.

This sequence belongs to the DEFL family.

It is found in the secreted. This Arabidopsis thaliana (Mouse-ear cress) protein is Defensin-like protein 140 (LCR15).